The sequence spans 459 residues: Bifunctional protein GlmU (459 aa).

Positions 1-230 (MSNRFAVILA…FDETLGVNDR (230 aa)) are pyrophosphorylase. UDP-N-acetyl-alpha-D-glucosamine is bound by residues 9 to 12 (LAAG), K23, Q73, and 78 to 79 (GT). D103 is a Mg(2+) binding site. The UDP-N-acetyl-alpha-D-glucosamine site is built by G140, E155, N170, and N228. N228 is a Mg(2+) binding site. The linker stretch occupies residues 231–251 (VALSQAEIIMKNRINRKNMVN). The N-acetyltransferase stretch occupies residues 252–459 (GVTIIDPSNT…VDQLLNKKKS (208 aa)). The UDP-N-acetyl-alpha-D-glucosamine site is built by R333 and K351. The Proton acceptor role is filled by H363. 2 residues coordinate UDP-N-acetyl-alpha-D-glucosamine: Y366 and N377. Residues 386 to 387 (NY), A423, and R440 each bind acetyl-CoA.

The protein in the N-terminal section; belongs to the N-acetylglucosamine-1-phosphate uridyltransferase family. This sequence in the C-terminal section; belongs to the transferase hexapeptide repeat family. Homotrimer. It depends on Mg(2+) as a cofactor.

The protein localises to the cytoplasm. It catalyses the reaction alpha-D-glucosamine 1-phosphate + acetyl-CoA = N-acetyl-alpha-D-glucosamine 1-phosphate + CoA + H(+). The catalysed reaction is N-acetyl-alpha-D-glucosamine 1-phosphate + UTP + H(+) = UDP-N-acetyl-alpha-D-glucosamine + diphosphate. Its pathway is nucleotide-sugar biosynthesis; UDP-N-acetyl-alpha-D-glucosamine biosynthesis; N-acetyl-alpha-D-glucosamine 1-phosphate from alpha-D-glucosamine 6-phosphate (route II): step 2/2. It functions in the pathway nucleotide-sugar biosynthesis; UDP-N-acetyl-alpha-D-glucosamine biosynthesis; UDP-N-acetyl-alpha-D-glucosamine from N-acetyl-alpha-D-glucosamine 1-phosphate: step 1/1. It participates in bacterial outer membrane biogenesis; LPS lipid A biosynthesis. Catalyzes the last two sequential reactions in the de novo biosynthetic pathway for UDP-N-acetylglucosamine (UDP-GlcNAc). The C-terminal domain catalyzes the transfer of acetyl group from acetyl coenzyme A to glucosamine-1-phosphate (GlcN-1-P) to produce N-acetylglucosamine-1-phosphate (GlcNAc-1-P), which is converted into UDP-GlcNAc by the transfer of uridine 5-monophosphate (from uridine 5-triphosphate), a reaction catalyzed by the N-terminal domain. The protein is Bifunctional protein GlmU of Bacillus cereus (strain ZK / E33L).